The following is a 589-amino-acid chain: Protein drl-1 (589 aa).

Residues 1–51 (MHSEEKYLHIPNNTKYPEIIVEEEEEDPSEEERSELSETDDVATPLRPSDT) form a disordered region. A compositionally biased stretch (acidic residues) spans 20 to 41 (IVEEEEEDPSEEERSELSETDD). Residues 97 to 373 (WRINEDVMKD…QNLLESHGSK (277 aa)) form the Protein kinase domain. The next 3 helical transmembrane spans lie at 429–449 (GFIP…VLLV), 456–476 (LCAA…IFLI), and 491–511 (GFVV…TTLC).

It belongs to the protein kinase superfamily. STE Ser/Thr protein kinase family. As to expression, expressed in vulval and body wall muscles, hypodermis, seam cells and tissues next to pharynx and anus.

It is found in the membrane. Functionally, negatively regulates lifespan and health span probably by participating in nutrient sensing. The chain is Protein drl-1 from Caenorhabditis elegans.